Here is a 247-residue protein sequence, read N- to C-terminus: ATP synthase subunit a, chloroplastic (247 aa).

Transmembrane regions (helical) follow at residues 38–58, 95–115, 134–154, 199–219, and 220–240; these read QVLI…IIAV, VPFI…GALL, INTT…AGLT, LVVV…VMFL, and GLFT…AYIG.

This sequence belongs to the ATPase A chain family. F-type ATPases have 2 components, CF(1) - the catalytic core - and CF(0) - the membrane proton channel. CF(1) has five subunits: alpha(3), beta(3), gamma(1), delta(1), epsilon(1). CF(0) has four main subunits: a, b, b' and c.

It is found in the plastid. Its subcellular location is the chloroplast thylakoid membrane. Its function is as follows. Key component of the proton channel; it plays a direct role in the translocation of protons across the membrane. This is ATP synthase subunit a, chloroplastic from Dioscorea elephantipes (Elephant's foot yam).